The following is a 156-amino-acid chain: Large ribosomal subunit protein uL15 (156 aa).

Residues Met-1 to Thr-13 show a composition bias toward basic and acidic residues. The disordered stretch occupies residues Met-1–Lys-39. Positions Arg-21–Val-35 are enriched in gly residues.

The protein belongs to the universal ribosomal protein uL15 family. In terms of assembly, part of the 50S ribosomal subunit.

In terms of biological role, binds to the 23S rRNA. The polypeptide is Large ribosomal subunit protein uL15 (Rhizobium meliloti (strain 1021) (Ensifer meliloti)).